A 567-amino-acid polypeptide reads, in one-letter code: PEX5-related protein (567 aa).

Residues 56-105 (SEPVSQPQTKAKKSEPSSKSSSLKKKADGSDLISADAEQRAQALRGPETS) are disordered. Ser146 is modified (phosphoserine). A disordered region spans residues 150-169 (LWSAEHRSQPELSTGKSALN). Phosphoserine is present on residues Ser194, Ser198, and Ser202. TPR repeat units follow at residues 267–300 (WPGAFEEGLKRLKEGDLPVTILFMEAAILQDPGD), 301–334 (AEAWQFLGITQAENENEQAAIVALQRCLELQPNN), and 336–368 (KALMALAVSYTNTSHQQDACEALKNWIKQNPKY). Phosphoserine occurs at positions 386 and 388. TPR repeat units lie at residues 415–448 (PDLQTGLGVLFHLSGEFNRAIDAFNAALTVRPED), 450–482 (SLWNRLGATLANGDRSEEAVEAYTRALEIQPGF), and 484–516 (RSRYNLGISCINLGAYREAVSNFLTALSLQRKS).

This sequence belongs to the peroxisomal targeting signal receptor family. Interacts with RAB8B. Forms an obligate 4:4 complex with HCN2. Interacts with HCN3. Interacts with HCN4 with a 4:4 HCN4:PEX5L stoichiometry; reduces the effects of cAMP on the voltage-dependence and rate of activation of HCN4.

Its subcellular location is the cytoplasm. The protein resides in the membrane. Its function is as follows. Accessory subunit of hyperpolarization-activated cyclic nucleotide-gated (HCN) channels, regulating their cell-surface expression and cyclic nucleotide dependence. The polypeptide is PEX5-related protein (Pex5l) (Mus musculus (Mouse)).